The following is a 220-amino-acid chain: Ribose-5-phosphate isomerase A (220 aa).

Substrate is bound by residues 25–28 (TGST), 80–83 (DGAD), and 93–96 (KGGG). Glu102 serves as the catalytic Proton acceptor. Lys120 contributes to the substrate binding site.

This sequence belongs to the ribose 5-phosphate isomerase family. As to quaternary structure, homodimer.

It carries out the reaction aldehydo-D-ribose 5-phosphate = D-ribulose 5-phosphate. The protein operates within carbohydrate degradation; pentose phosphate pathway; D-ribose 5-phosphate from D-ribulose 5-phosphate (non-oxidative stage): step 1/1. Its function is as follows. Catalyzes the reversible conversion of ribose-5-phosphate to ribulose 5-phosphate. This Bacillus thuringiensis subsp. konkukian (strain 97-27) protein is Ribose-5-phosphate isomerase A.